Reading from the N-terminus, the 515-residue chain is Carboxyl-terminal-processing peptidase 2, chloroplastic (515 aa).

In terms of domain architecture, PDZ spans 198-286 (FKSLRSGTQG…SAVELAIRSG (89 aa)). Residues Ser417 and Lys442 each act as charge relay system in the active site.

It belongs to the peptidase S41A family.

Its subcellular location is the plastid. The protein resides in the chloroplast thylakoid lumen. The enzyme catalyses The enzyme shows specific recognition of a C-terminal tripeptide, Xaa-Yaa-Zaa, in which Xaa is preferably Ala or Leu, Yaa is preferably Ala or Tyr, and Zaa is preferably Ala, but then cleaves at a variable distance from the C-terminus. A typical cleavage is -Ala-Ala-|-Arg-Ala-Ala-Lys-Glu-Asn-Tyr-Ala-Leu-Ala-Ala.. Its function is as follows. Protease involved in the C-terminal processing of the chloroplastic D1 protein of photosystem II. This proteolytic processing is necessary to allow the light-driven assembly of the tetranuclear manganese cluster, which is responsible for photosynthetic water oxidation. The polypeptide is Carboxyl-terminal-processing peptidase 2, chloroplastic (CTPA2) (Arabidopsis thaliana (Mouse-ear cress)).